Here is a 267-residue protein sequence, read N- to C-terminus: Type II pantothenate kinase (267 aa).

6–13 contacts ATP; that stretch reads DAGGTLIK. The active-site Proton acceptor is Glu70. Residues Thr99, 121-125, Tyr137, and Ser225 contribute to the ATP site; that span reads GGMIQ.

It belongs to the type II pantothenate kinase family. In terms of assembly, homodimer.

It localises to the cytoplasm. The catalysed reaction is (R)-pantothenate + ATP = (R)-4'-phosphopantothenate + ADP + H(+). It functions in the pathway cofactor biosynthesis; coenzyme A biosynthesis; CoA from (R)-pantothenate: step 1/5. In terms of biological role, catalyzes the phosphorylation of pantothenate (Pan), the first step in CoA biosynthesis. This is Type II pantothenate kinase from Staphylococcus aureus (strain USA300).